The following is a 331-amino-acid chain: D-alanine--D-alanine ligase (331 aa).

Residues 116–316 (KRLWQTHSLP…YEDFVLQLAA (201 aa)) form the ATP-grasp domain. 142 to 197 (ADRLGLPLIVKPAREGSSIGLTKVTSVAELPAAYEKAARLDRDVMAEQFIDGDELT) serves as a coordination point for ATP. The Mg(2+) site is built by aspartate 269, glutamate 283, and asparagine 285.

This sequence belongs to the D-alanine--D-alanine ligase family. Requires Mg(2+) as cofactor. Mn(2+) is required as a cofactor.

It localises to the cytoplasm. It catalyses the reaction 2 D-alanine + ATP = D-alanyl-D-alanine + ADP + phosphate + H(+). The protein operates within cell wall biogenesis; peptidoglycan biosynthesis. In terms of biological role, cell wall formation. This is D-alanine--D-alanine ligase from Ralstonia nicotianae (strain ATCC BAA-1114 / GMI1000) (Ralstonia solanacearum).